A 154-amino-acid chain; its full sequence is Iron-sulfur cluster assembly 2 homolog, mitochondrial (154 aa).

A mitochondrion-targeting transit peptide spans Met-1 to Ser-8. Fe cation-binding residues include Cys-79, Cys-144, and Cys-146.

Belongs to the HesB/IscA family. As to quaternary structure, heterotetramer; forms a dimer of dimers with IBA57. Interacts with [2Fe-2S]-ISCA2 forming the heterodimer [2Fe- 2S]-ISCA2-IBA57 complex; [2Fe-2S] cluster binding is absolutely required to promote the complex formation.

Its subcellular location is the mitochondrion. Its function is as follows. Involved in the maturation of mitochondrial 4Fe-4S proteins functioning late in the iron-sulfur cluster assembly pathway. May be involved in the binding of an intermediate of Fe/S cluster assembly. This Mus musculus (Mouse) protein is Iron-sulfur cluster assembly 2 homolog, mitochondrial (Isca2).